The sequence spans 364 residues: UDP-N-acetylglucosamine--N-acetylmuramyl-(pentapeptide) pyrophosphoryl-undecaprenol N-acetylglucosamine transferase (364 aa).

UDP-N-acetyl-alpha-D-glucosamine contacts are provided by residues 13-15 (TGG), Asn125, Arg165, Ser192, and Gln293.

The protein belongs to the glycosyltransferase 28 family. MurG subfamily.

The protein resides in the cell inner membrane. The catalysed reaction is di-trans,octa-cis-undecaprenyl diphospho-N-acetyl-alpha-D-muramoyl-L-alanyl-D-glutamyl-meso-2,6-diaminopimeloyl-D-alanyl-D-alanine + UDP-N-acetyl-alpha-D-glucosamine = di-trans,octa-cis-undecaprenyl diphospho-[N-acetyl-alpha-D-glucosaminyl-(1-&gt;4)]-N-acetyl-alpha-D-muramoyl-L-alanyl-D-glutamyl-meso-2,6-diaminopimeloyl-D-alanyl-D-alanine + UDP + H(+). The protein operates within cell wall biogenesis; peptidoglycan biosynthesis. In terms of biological role, cell wall formation. Catalyzes the transfer of a GlcNAc subunit on undecaprenyl-pyrophosphoryl-MurNAc-pentapeptide (lipid intermediate I) to form undecaprenyl-pyrophosphoryl-MurNAc-(pentapeptide)GlcNAc (lipid intermediate II). The sequence is that of UDP-N-acetylglucosamine--N-acetylmuramyl-(pentapeptide) pyrophosphoryl-undecaprenol N-acetylglucosamine transferase from Cereibacter sphaeroides (strain ATCC 17025 / ATH 2.4.3) (Rhodobacter sphaeroides).